A 319-amino-acid chain; its full sequence is tRNA-modifying protein YgfZ (319 aa).

Folate contacts are provided by Trp-27 and Trp-189.

Belongs to the tRNA-modifying YgfZ family.

It localises to the cytoplasm. Folate-binding protein involved in regulating the level of ATP-DnaA and in the modification of some tRNAs. It is probably a key factor in regulatory networks that act via tRNA modification, such as initiation of chromosomal replication. The chain is tRNA-modifying protein YgfZ from Buchnera aphidicola subsp. Acyrthosiphon pisum (strain APS) (Acyrthosiphon pisum symbiotic bacterium).